The chain runs to 769 residues: Transferrin receptor protein 1 (769 aa).

Residues 1 to 70 (MMDQARSAFS…KPKRFNGFIC (70 aa)) are Cytoplasmic-facing. The segment at 1–70 (MMDQARSAFS…KPKRFNGFIC (70 aa)) is mediates interaction with SH3BP4. 2 positions are modified to phosphoserine: Ser10 and Ser19. Tyr20 carries the phosphotyrosine modification. The short motif at 20-23 (YTRF) is the Endocytosis signal element. Phosphothreonine is present on Thr21. The residue at position 24 (Ser24) is a Phosphoserine. The short motif at 61–64 (KPKR) is the Stop-transfer sequence element. A lipid anchor (S-palmitoyl cysteine) is attached at Cys70. A helical; Signal-anchor for type II membrane protein membrane pass occupies residues 71 to 91 (YGTIAIILFFLIGFMIGYLGY). The Extracellular segment spans residues 92–769 (CKRVEAKSEC…GDIWDIDNEF (678 aa)). Thr107 is a glycosylation site (O-linked (GalNAc...) threonine). Positions 232–322 (SKAATVTGRL…GTGDPYTPGF (91 aa)) constitute a PA domain. Asn260 and Asn326 each carry an N-linked (GlcNAc...) asparagine glycan. Positions 578-769 (TMDVYEKLIQ…GDIWDIDNEF (192 aa)) are ligand-binding. Residues 655–657 (RGD) carry the Cell attachment site motif. Residues Asn731 and Asn736 are each glycosylated (N-linked (GlcNAc...) asparagine).

It belongs to the peptidase M28 family. M28B subfamily. As to quaternary structure, homodimer; disulfide-linked. Binds one transferrin molecule per subunit. Interacts with SH3BP4. Homodimer; disulfide-linked. Binds one transferrin or HFE molecule per subunit. Binds the HLA class II histocompatibility antigen, DR1. Interacts with SH3BP3. Interacts with STEAP3; facilitates TFRC endocytosis in erythroid precursor cells. Stearoylated by ZDHHC6 which inhibits TFRC-mediated activation of the JNK pathway and promotes mitochondrial fragmentation. Stearoylation does not affect iron uptake. Post-translationally, N- and O-glycosylated, phosphorylated and palmitoylated.

It is found in the cell membrane. Its subcellular location is the melanosome. In terms of biological role, cellular uptake of iron occurs via receptor-mediated endocytosis of ligand-occupied transferrin receptor into specialized endosomes. Endosomal acidification leads to iron release. The apotransferrin-receptor complex is then recycled to the cell surface with a return to neutral pH and the concomitant loss of affinity of apotransferrin for its receptor. Transferrin receptor is necessary for development of erythrocytes and the nervous system. Positively regulates T and B cell proliferation through iron uptake. Acts as a lipid sensor that regulates mitochondrial fusion by regulating activation of the JNK pathway. When dietary levels of stearate (C18:0) are low, promotes activation of the JNK pathway, resulting in HUWE1-mediated ubiquitination and subsequent degradation of the mitofusin MFN2 and inhibition of mitochondrial fusion. When dietary levels of stearate (C18:0) are high, TFRC stearoylation inhibits activation of the JNK pathway and thus degradation of the mitofusin MFN2. Mediates uptake of NICOL1 into fibroblasts where it may regulate extracellular matrix production. This is Transferrin receptor protein 1 (TFRC) from Felis catus (Cat).